The following is a 291-amino-acid chain: 4-hydroxy-tetrahydrodipicolinate synthase (291 aa).

Threonine 45 lines the pyruvate pocket. The Proton donor/acceptor role is filled by tyrosine 131. The active-site Schiff-base intermediate with substrate is the lysine 159. Residue isoleucine 202 participates in pyruvate binding.

The protein belongs to the DapA family. In terms of assembly, homotetramer; dimer of dimers.

It is found in the cytoplasm. The catalysed reaction is L-aspartate 4-semialdehyde + pyruvate = (2S,4S)-4-hydroxy-2,3,4,5-tetrahydrodipicolinate + H2O + H(+). The protein operates within amino-acid biosynthesis; L-lysine biosynthesis via DAP pathway; (S)-tetrahydrodipicolinate from L-aspartate: step 3/4. In terms of biological role, catalyzes the condensation of (S)-aspartate-beta-semialdehyde [(S)-ASA] and pyruvate to 4-hydroxy-tetrahydrodipicolinate (HTPA). This is 4-hydroxy-tetrahydrodipicolinate synthase from Methanococcoides burtonii (strain DSM 6242 / NBRC 107633 / OCM 468 / ACE-M).